The following is a 184-amino-acid chain: Probable RNA 2'-phosphotransferase (184 aa).

The protein belongs to the KptA/TPT1 family.

Functionally, removes the 2'-phosphate from RNA via an intermediate in which the phosphate is ADP-ribosylated by NAD followed by a presumed transesterification to release the RNA and generate ADP-ribose 1''-2''-cyclic phosphate (APPR&gt;P). May function as an ADP-ribosylase. This Escherichia coli O8 (strain IAI1) protein is Probable RNA 2'-phosphotransferase.